The chain runs to 323 residues: Viral cathepsin (323 aa).

The first 16 residues, 1-16 (MNKILFYLFVYAVVKS), serve as a signal peptide directing secretion. The propeptide at 17–112 (AAYDPLKAPN…ILLDQPPGKG (96 aa)) is activation peptide. Disulfide bonds link Cys-133/Cys-174, Cys-167/Cys-207, and Cys-262/Cys-310. Cys-136 is a catalytic residue. Asn-158 carries N-linked (GlcNAc...) asparagine; by host glycosylation. Residues His-269 and Asn-289 contribute to the active site.

This sequence belongs to the peptidase C1 family. In terms of processing, synthesized as an inactive proenzyme and activated by proteolytic removal of the inhibitory propeptide.

It catalyses the reaction Endopeptidase of broad specificity, hydrolyzing substrates of both cathepsin L and cathepsin B.. In terms of biological role, cysteine protease that plays an essential role in host liquefaction to facilitate horizontal transmission of the virus. May participate in the degradation of foreign protein expressed by the baculovirus system. The polypeptide is Viral cathepsin (VCATH) (Bombyx mori (Silk moth)).